Here is a 510-residue protein sequence, read N- to C-terminus: NAD(P)H-quinone oxidoreductase subunit 2 B, chloroplastic (510 aa).

A run of 12 helical transmembrane segments spans residues 24-44 (LLLFNGSFIFPECILIFGLIL), 59-79 (WFYFISSTSLVISITALLFRW), 99-119 (IFQFLILLCSTLCIPLSVEYI), 124-144 (MAITEFLLFILTATLGGMFLC), 149-169 (LITIFVAPECFSLCSYLLSGY), 183-203 (YLLMGGASSSILVHGFSWLYG), 229-249 (ISIALISITVGLGFKLSPAPF), 295-315 (WHLLLEILAILSMILGNLLAI), 323-343 (MLAYSSIGQIGYVIIGIIVGD), 354-374 (YMLFYISMNLGTFACIVLFGL), 395-415 (ALSLALCLLSLGGLPPLAGFF), and 418-438 (LYLFWCGWQAGLYFLVSIGLL).

This sequence belongs to the complex I subunit 2 family. NDH is composed of at least 16 different subunits, 5 of which are encoded in the nucleus.

The protein localises to the plastid. Its subcellular location is the chloroplast thylakoid membrane. It carries out the reaction a plastoquinone + NADH + (n+1) H(+)(in) = a plastoquinol + NAD(+) + n H(+)(out). The catalysed reaction is a plastoquinone + NADPH + (n+1) H(+)(in) = a plastoquinol + NADP(+) + n H(+)(out). NDH shuttles electrons from NAD(P)H:plastoquinone, via FMN and iron-sulfur (Fe-S) centers, to quinones in the photosynthetic chain and possibly in a chloroplast respiratory chain. The immediate electron acceptor for the enzyme in this species is believed to be plastoquinone. Couples the redox reaction to proton translocation, and thus conserves the redox energy in a proton gradient. The protein is NAD(P)H-quinone oxidoreductase subunit 2 B, chloroplastic of Lolium perenne (Perennial ryegrass).